Here is a 91-residue protein sequence, read N- to C-terminus: Small ubiquitin-related modifier (91 aa).

A Ubiquitin-like domain is found at 13 to 91 (EYIKIKVVGQ…EVYQEQLGGF (79 aa)). A Glycyl lysine isopeptide (Gly-Lys) (interchain with K-? in acceptor proteins) cross-link involves residue glycine 90. Residue phenylalanine 91 is a propeptide.

It belongs to the ubiquitin family. SUMO subfamily. In terms of assembly, covalently attached to tbx-2. Covalently attached to lin-1. Covalently attached to lin-11. Covalently attached to sop-2. Covalently attached to bet-1. Post-translationally, cleavage of precursor form by ulp-1 is necessary for function.

The protein localises to the cytoplasm. Its subcellular location is the nucleus. It is found in the cytoskeleton. It localises to the spindle. The protein resides in the chromosome. The protein localises to the microtubule organizing center. Its subcellular location is the centrosome. In terms of biological role, ubiquitin-like protein which can be covalently attached to target lysines as a monomer. Does not seem to be involved in protein degradation and may function as an antagonist of ubiquitin in the degradation process. Plays a role in a number of cellular processes such as nuclear transport, DNA replication and repair, mitosis and signal transduction. Covalent attachment to its substrates requires prior activation by the E1 complex aos-1-uba-2 and linkage to the E2 enzyme ubc-9, and can be promoted by an E3 ligase such as gei-17. Required for embryonic development, fertility, vulval morphogenesis and inhibition of vulval cell fates. Probably by sumoylating bet-1, prevents muscle myosin depletion in aging adults probably by preventing myoblast growth factor receptor egl-15 overexpression. Plays a role in the attenuation of the let-60/ras pathway. Plays a role in male tail tip morphogenesis. Plays a role in the mitochondrial stress response with its covalent attachment to transcription factors dve-1 and afts-1 negatively regulating the mitochondrial unfolded protein response. This chain is Small ubiquitin-related modifier, found in Caenorhabditis elegans.